Consider the following 232-residue polypeptide: Large ribosomal subunit protein uL1 (232 aa).

Belongs to the universal ribosomal protein uL1 family. In terms of assembly, part of the 50S ribosomal subunit.

In terms of biological role, binds directly to 23S rRNA. The L1 stalk is quite mobile in the ribosome, and is involved in E site tRNA release. Functionally, protein L1 is also a translational repressor protein, it controls the translation of the L11 operon by binding to its mRNA. The protein is Large ribosomal subunit protein uL1 of Marinobacter nauticus (strain ATCC 700491 / DSM 11845 / VT8) (Marinobacter aquaeolei).